Here is a 1204-residue protein sequence, read N- to C-terminus: TPR repeat-containing protein DDB_G0287999 (1204 aa).

Positions 32-48 are enriched in low complexity; that stretch reads TTDTTTTTSTSTTTDTD. The disordered stretch occupies residues 32-55; it reads TTDTTTTTSTSTTTDTDTNSEKSN. TPR repeat units follow at residues 263 to 296, 379 to 412, and 583 to 617; these read SKGL…YKDL, NDSN…DQLY, and IQHF…GSVT. The segment at 360–387 is disordered; the sequence is QPPPQEQQLMDDDSNSNSNNDSNNIIKN. The span at 374–387 shows a compositional bias: low complexity; it reads NSNSNNDSNNIIKN. Disordered regions lie at residues 639 to 660 and 761 to 797; these read NNNN…NNNN and DDND…KTTT. Residues 766–778 are compositionally biased toward low complexity; that stretch reads DNNNNNNNNNNNN.

The protein is TPR repeat-containing protein DDB_G0287999 of Dictyostelium discoideum (Social amoeba).